Consider the following 637-residue polypeptide: tRNA uridine 5-carboxymethylaminomethyl modification enzyme MnmG (637 aa).

FAD is bound by residues 15-20 (GAGHAG), Ile127, and Ser182. 276–290 (GPRYCPSIEDKIVRF) contacts NAD(+). An FAD-binding site is contributed by Gln373.

The protein belongs to the MnmG family. In terms of assembly, homodimer. Heterotetramer of two MnmE and two MnmG subunits. The cofactor is FAD.

The protein localises to the cytoplasm. In terms of biological role, NAD-binding protein involved in the addition of a carboxymethylaminomethyl (cmnm) group at the wobble position (U34) of certain tRNAs, forming tRNA-cmnm(5)s(2)U34. The polypeptide is tRNA uridine 5-carboxymethylaminomethyl modification enzyme MnmG (Streptococcus pneumoniae (strain Hungary19A-6)).